The chain runs to 600 residues: DNA polymerase alpha subunit B (600 aa).

Residues 112–167 (AYTTPSKGPHKRVSSTPETPLTKRSISTRSPHQLLSPSSFSPSATPSQKYSSRTNR) form a disordered region. Over residues 125–140 (SSTPETPLTKRSISTR) the composition is skewed to polar residues. Serine 126 carries the post-translational modification Phosphoserine. Phosphothreonine occurs at positions 127 and 130. Residues serine 141, serine 147, serine 152, and serine 154 each carry the phosphoserine modification. Positions 141–158 (SPHQLLSPSSFSPSATPS) are enriched in low complexity.

The protein belongs to the DNA polymerase alpha subunit B family. Component of the alpha DNA polymerase complex (also known as the alpha DNA polymerase-primase complex) consisting of four subunits: the catalytic subunit POLA1, the regulatory subunit POLA2, and the primase complex subunits PRIM1 and PRIM2 respectively. Within the complex, POLA1 directly interacts with PRIM2. In terms of processing, phosphorylated in a cell cycle-dependent manner, in G2/M phase.

Its subcellular location is the nucleus. Accessory subunit of the DNA polymerase alpha complex (also known as the alpha DNA polymerase-primase complex) which plays an essential role in the initiation of DNA synthesis. During the S phase of the cell cycle, the DNA polymerase alpha complex (composed of a catalytic subunit POLA1, an accessory subunit POLA2 and two primase subunits, the catalytic subunit PRIM1 and the regulatory subunit PRIM2) is recruited to DNA at the replicative forks via direct interactions with MCM10 and WDHD1. The primase subunit of the polymerase alpha complex initiates DNA synthesis by oligomerising short RNA primers on both leading and lagging strands. These primers are initially extended by the polymerase alpha catalytic subunit and subsequently transferred to polymerase delta and polymerase epsilon for processive synthesis on the lagging and leading strand, respectively. This is DNA polymerase alpha subunit B (Pola2) from Rattus norvegicus (Rat).